Consider the following 534-residue polypeptide: Probable protein kinase UbiB (534 aa).

Residues 23–43 (DLLFALPLPWFLLAVRYVLPW) form a helical membrane-spanning segment. Positions 125–492 (RFDVDPLASA…WKKRKDDWFL (368 aa)) constitute a Protein kinase domain. ATP contacts are provided by residues 131–139 (LASASVAQV) and Lys-153. Catalysis depends on Asp-288, which acts as the Proton acceptor. 2 helical membrane passes run 490–510 (WFLR…AIGG) and 512–532 (LNQL…YLIV).

It belongs to the ABC1 family. UbiB subfamily.

It is found in the cell inner membrane. Its pathway is cofactor biosynthesis; ubiquinone biosynthesis [regulation]. In terms of biological role, is probably a protein kinase regulator of UbiI activity which is involved in aerobic coenzyme Q (ubiquinone) biosynthesis. This is Probable protein kinase UbiB from Pseudomonas fluorescens (strain SBW25).